Consider the following 1111-residue polypeptide: Receptor-type guanylate cyclase gcy-14 (1111 aa).

Residues methionine 1–glycine 14 form the signal peptide. Over glutamine 15–tyrosine 473 the chain is Extracellular. 6 N-linked (GlcNAc...) asparagine glycosylation sites follow: asparagine 65, asparagine 130, asparagine 318, asparagine 340, asparagine 365, and asparagine 379. Residues leucine 474 to glycine 494 traverse the membrane as a helical segment. Residues valine 482–asparagine 817 enclose the Protein kinase domain. ATP-binding positions include leucine 488 to leucine 496 and lysine 545. Residues leucine 495–serine 1111 are Cytoplasmic-facing. The Guanylate cyclase domain occupies threonine 875–glutamate 1005. The segment at serine 1061–serine 1082 is disordered. Basic and acidic residues predominate over residues proline 1065–arginine 1074.

The protein belongs to the adenylyl cyclase class-4/guanylyl cyclase family. As to quaternary structure, homodimer. As to expression, expressed asymmetrically in ASEL sensory neuron.

The protein resides in the cell membrane. Its subcellular location is the cell projection. It is found in the cilium. The catalysed reaction is GTP = 3',5'-cyclic GMP + diphosphate. Functionally, guanylate cyclase involved in the production of the second messenger cGMP. Regulates chemotaxis responses toward Na(1+) and Li(1+) salt ions and alkaline pH in ASE left (ASEL) sensory neuron. Directly senses environmental alkalinity in ASEL neuron which probably leads to the activation of cGMP-gated cation channel tax2/tax4. The sequence is that of Receptor-type guanylate cyclase gcy-14 from Caenorhabditis elegans.